The chain runs to 360 residues: Phospho-N-acetylmuramoyl-pentapeptide-transferase (360 aa).

A run of 10 helical transmembrane segments spans residues 27–47 (GAMI…INSL), 71–91 (TPTM…LLWA), 93–113 (LASV…AIGF), 128–148 (FSGK…AFTI), 168–188 (LVIN…VGAG), 199–219 (GLAI…AYLS), 239–259 (LAVV…FNAP), 262–282 (AIFM…TVAV), 288–308 (IVLA…IIQV), and 337–357 (QVVI…LSTL).

Belongs to the glycosyltransferase 4 family. MraY subfamily. The cofactor is Mg(2+).

Its subcellular location is the cell inner membrane. It carries out the reaction UDP-N-acetyl-alpha-D-muramoyl-L-alanyl-gamma-D-glutamyl-meso-2,6-diaminopimeloyl-D-alanyl-D-alanine + di-trans,octa-cis-undecaprenyl phosphate = di-trans,octa-cis-undecaprenyl diphospho-N-acetyl-alpha-D-muramoyl-L-alanyl-D-glutamyl-meso-2,6-diaminopimeloyl-D-alanyl-D-alanine + UMP. It participates in cell wall biogenesis; peptidoglycan biosynthesis. Functionally, catalyzes the initial step of the lipid cycle reactions in the biosynthesis of the cell wall peptidoglycan: transfers peptidoglycan precursor phospho-MurNAc-pentapeptide from UDP-MurNAc-pentapeptide onto the lipid carrier undecaprenyl phosphate, yielding undecaprenyl-pyrophosphoryl-MurNAc-pentapeptide, known as lipid I. In Brucella abortus (strain S19), this protein is Phospho-N-acetylmuramoyl-pentapeptide-transferase.